We begin with the raw amino-acid sequence, 288 residues long: 4-hydroxy-3-methylbut-2-enyl diphosphate reductase (288 aa).

C12 is a [4Fe-4S] cluster binding site. H42 and H77 together coordinate (2E)-4-hydroxy-3-methylbut-2-enyl diphosphate. Dimethylallyl diphosphate-binding residues include H42 and H77. 2 residues coordinate isopentenyl diphosphate: H42 and H77. C99 provides a ligand contact to [4Fe-4S] cluster. H127 contributes to the (2E)-4-hydroxy-3-methylbut-2-enyl diphosphate binding site. H127 contributes to the dimethylallyl diphosphate binding site. H127 is an isopentenyl diphosphate binding site. E129 acts as the Proton donor in catalysis. T165 serves as a coordination point for (2E)-4-hydroxy-3-methylbut-2-enyl diphosphate. C193 contributes to the [4Fe-4S] cluster binding site. S221, S222, N223, and S265 together coordinate (2E)-4-hydroxy-3-methylbut-2-enyl diphosphate. The dimethylallyl diphosphate site is built by S221, S222, N223, and S265. Isopentenyl diphosphate-binding residues include S221, S222, N223, and S265.

This sequence belongs to the IspH family. Requires [4Fe-4S] cluster as cofactor.

It carries out the reaction isopentenyl diphosphate + 2 oxidized [2Fe-2S]-[ferredoxin] + H2O = (2E)-4-hydroxy-3-methylbut-2-enyl diphosphate + 2 reduced [2Fe-2S]-[ferredoxin] + 2 H(+). The catalysed reaction is dimethylallyl diphosphate + 2 oxidized [2Fe-2S]-[ferredoxin] + H2O = (2E)-4-hydroxy-3-methylbut-2-enyl diphosphate + 2 reduced [2Fe-2S]-[ferredoxin] + 2 H(+). Its pathway is isoprenoid biosynthesis; dimethylallyl diphosphate biosynthesis; dimethylallyl diphosphate from (2E)-4-hydroxy-3-methylbutenyl diphosphate: step 1/1. It participates in isoprenoid biosynthesis; isopentenyl diphosphate biosynthesis via DXP pathway; isopentenyl diphosphate from 1-deoxy-D-xylulose 5-phosphate: step 6/6. In terms of biological role, catalyzes the conversion of 1-hydroxy-2-methyl-2-(E)-butenyl 4-diphosphate (HMBPP) into a mixture of isopentenyl diphosphate (IPP) and dimethylallyl diphosphate (DMAPP). Acts in the terminal step of the DOXP/MEP pathway for isoprenoid precursor biosynthesis. In Caldanaerobacter subterraneus subsp. tengcongensis (strain DSM 15242 / JCM 11007 / NBRC 100824 / MB4) (Thermoanaerobacter tengcongensis), this protein is 4-hydroxy-3-methylbut-2-enyl diphosphate reductase.